The sequence spans 325 residues: Acetyl-coenzyme A carboxylase carboxyl transferase subunit alpha (325 aa).

The region spanning 35-292 (EINKLEARLE…DDVLKRSLRE (258 aa)) is the CoA carboxyltransferase C-terminal domain.

It belongs to the AccA family. Acetyl-CoA carboxylase is a heterohexamer composed of biotin carboxyl carrier protein (AccB), biotin carboxylase (AccC) and two subunits each of ACCase subunit alpha (AccA) and ACCase subunit beta (AccD).

The protein resides in the cytoplasm. It carries out the reaction N(6)-carboxybiotinyl-L-lysyl-[protein] + acetyl-CoA = N(6)-biotinyl-L-lysyl-[protein] + malonyl-CoA. It functions in the pathway lipid metabolism; malonyl-CoA biosynthesis; malonyl-CoA from acetyl-CoA: step 1/1. Component of the acetyl coenzyme A carboxylase (ACC) complex. First, biotin carboxylase catalyzes the carboxylation of biotin on its carrier protein (BCCP) and then the CO(2) group is transferred by the carboxyltransferase to acetyl-CoA to form malonyl-CoA. The chain is Acetyl-coenzyme A carboxylase carboxyl transferase subunit alpha from Anoxybacillus flavithermus (strain DSM 21510 / WK1).